The sequence spans 174 residues: Gamma-crystallin E (174 aa).

2 consecutive Beta/gamma crystallin 'Greek key' domains span residues 2–40 (GKIT…RVDS) and 41–83 (GCWM…RLIP). The connecting peptide stretch occupies residues 84-87 (HSSS). Beta/gamma crystallin 'Greek key' domains follow at residues 88 to 128 (HRIR…HVME) and 129 to 171 (GYWV…RRIM).

The protein belongs to the beta/gamma-crystallin family. In terms of tissue distribution, detected in the superior olivary complex and fibers of the ventral aoustic stria of the auditory hindbrain.

In terms of biological role, crystallins are the dominant structural components of the vertebrate eye lens. In Rattus norvegicus (Rat), this protein is Gamma-crystallin E (Cryge).